The chain runs to 626 residues: ABC transporter G family member 8 (626 aa).

The ABC transporter domain maps to 56-300 (VNLDNKTENS…SLGYPCPNNT (245 aa)). An ATP-binding site is contributed by 90–97 (GPSGSGKS). The 249-residue stretch at 373 to 621 (GNALSRVITA…SLSYFALHFL (249 aa)) folds into the ABC transmembrane type-2 domain. A run of 7 helical transmembrane segments spans residues 376-396 (LSRV…FAGL), 409-429 (TLFF…TLFL), 447-467 (FPYF…VTLV), 485-505 (FFFA…FISS), 515-535 (LTFS…GFYV), 543-563 (AFGW…VVIN), and 600-620 (FGVL…ALHF).

It belongs to the ABC transporter superfamily. ABCG family. Eye pigment precursor importer (TC 3.A.1.204) subfamily.

It localises to the membrane. The sequence is that of ABC transporter G family member 8 (abcG8) from Dictyostelium discoideum (Social amoeba).